We begin with the raw amino-acid sequence, 327 residues long: E3 ubiquitin-protein ligase ZNRF4 (327 aa).

An N-terminal signal peptide occupies residues 1–28 (MARFAWTRVAPVALVTFWLVLSLSPTDA). Over 29–150 (QVNLSSVDFL…EPCPDPECHP (122 aa)) the chain is Lumenal. Asn-31 carries an N-linked (GlcNAc...) asparagine glycan. A helical membrane pass occupies residues 151–171 (VVVASWALARALALAASTLFV). The Cytoplasmic portion of the chain corresponds to 172-327 (LRQLWPWVRG…AQSEATSELS (156 aa)). An RING-type; atypical zinc finger spans residues 209–252 (CAICLDDYEEGERLKILPCAHAYHCRCIDPWFSRAAQRSCPLCK). A compositionally biased stretch (polar residues) spans 256–265 (ASTHDGSTDG). Residues 256–279 (ASTHDGSTDGSVGGEEPPLPGHRP) are disordered.

In terms of assembly, interacts with CANX. In terms of tissue distribution, expressed exclusively in spermatids (at protein level).

It is found in the endoplasmic reticulum membrane. It catalyses the reaction S-ubiquitinyl-[E2 ubiquitin-conjugating enzyme]-L-cysteine + [acceptor protein]-L-lysine = [E2 ubiquitin-conjugating enzyme]-L-cysteine + N(6)-ubiquitinyl-[acceptor protein]-L-lysine.. It functions in the pathway protein modification; protein ubiquitination. Its function is as follows. E3 ubiquitin-protein ligase that acts as a negative regulator of NOD2 signaling by mediating ubiquitination and degradation of RIPK2. Also catalyzes ubiquitination and proteasomal degradation of CANX within the endoplasmic reticulum. Could have a role in spermatogenesis. The protein is E3 ubiquitin-protein ligase ZNRF4 of Mus musculus (Mouse).